The primary structure comprises 116 residues: Alpha-defensin 29 (116 aa).

The N-terminal stretch at methionine 1–alanine 19 is a signal peptide. A propeptide spanning residues aspartate 20–arginine 60 is cleaved from the precursor. The tract at residues isoleucine 22–valine 44 is disordered. Tandem repeats lie at residues cysteine 65–lysine 67, cysteine 68–valine 70, cysteine 71–lysine 73, cysteine 74–valine 76, cysteine 77–lysine 79, cysteine 80–valine 82, cysteine 83–threonine 85, cysteine 86–glutamine 88, and cysteine 89–lysine 91. Positions cysteine 65 to valine 70 are 2 X 3 AA tandem repeats of C-R-X. Positions cysteine 71–lysine 79 are 3 X 3 AA tandem repeats of C-Q-X. The 4 X 3 AA tandem repeats of C-P-X stretch occupies residues cysteine 80 to lysine 91.

The protein belongs to the alpha-defensin family. Small bowel.

The protein resides in the secreted. In terms of biological role, apparent precursor of a secreted, cationic, proline- and cysteine-rich peptide that contains Cys-Pro-Xaa repeats. Unlike cryptdin, the proposed mature peptide region lacks the structural motif characteristic of defensins. The polypeptide is Alpha-defensin 29 (Mus musculus (Mouse)).